The following is a 1417-amino-acid chain: DNA-directed RNA polymerase subunit beta' (1417 aa).

The Zn(2+) site is built by Cys-68, Cys-70, Cys-83, and Cys-86. Mg(2+) contacts are provided by Asp-458, Asp-460, and Asp-462. Cys-811, Cys-884, Cys-891, and Cys-894 together coordinate Zn(2+).

The protein belongs to the RNA polymerase beta' chain family. The RNAP catalytic core consists of 2 alpha, 1 beta, 1 beta' and 1 omega subunit. When a sigma factor is associated with the core the holoenzyme is formed, which can initiate transcription. Requires Mg(2+) as cofactor. Zn(2+) is required as a cofactor.

The catalysed reaction is RNA(n) + a ribonucleoside 5'-triphosphate = RNA(n+1) + diphosphate. In terms of biological role, DNA-dependent RNA polymerase catalyzes the transcription of DNA into RNA using the four ribonucleoside triphosphates as substrates. The chain is DNA-directed RNA polymerase subunit beta' from Francisella tularensis subsp. novicida (strain U112).